A 757-amino-acid chain; its full sequence is Endonuclease MutS2 (757 aa).

321–328 serves as a coordination point for ATP; the sequence is GPNMGGKT. In terms of domain architecture, Smr spans 681–756; the sequence is IDIRGMTVEE…GTGVTVVEVK (76 aa).

The protein belongs to the DNA mismatch repair MutS family. MutS2 subfamily. As to quaternary structure, homodimer. Binds to stalled ribosomes, contacting rRNA.

In terms of biological role, endonuclease that is involved in the suppression of homologous recombination and thus may have a key role in the control of bacterial genetic diversity. Its function is as follows. Acts as a ribosome collision sensor, splitting the ribosome into its 2 subunits. Detects stalled/collided 70S ribosomes which it binds and splits by an ATP-hydrolysis driven conformational change. Acts upstream of the ribosome quality control system (RQC), a ribosome-associated complex that mediates the extraction of incompletely synthesized nascent chains from stalled ribosomes and their subsequent degradation. Probably generates substrates for RQC. The polypeptide is Endonuclease MutS2 (Thermotoga sp. (strain RQ2)).